A 306-amino-acid polypeptide reads, in one-letter code: Putative HPr kinase/phosphorylase 2 (306 aa).

Catalysis depends on residues H138 and K159. 153-160 is a binding site for ATP; that stretch reads GESGVGKS. Residue S160 coordinates Mg(2+). D177 functions as the Proton acceptor; for phosphorylation activity. Proton donor; for dephosphorylation activity in the catalytic mechanism. The segment at 201–210 is important for the catalytic mechanism of both phosphorylation and dephosphorylation; sequence LALRSVGLLN. Residues 264 to 269 form an important for the catalytic mechanism of dephosphorylation region; it reads QLQPGR.

This sequence belongs to the HPrK/P family. As to quaternary structure, homohexamer. The cofactor is Mg(2+).

The catalysed reaction is [HPr protein]-L-serine + ATP = [HPr protein]-O-phospho-L-serine + ADP + H(+). It carries out the reaction [HPr protein]-O-phospho-L-serine + phosphate + H(+) = [HPr protein]-L-serine + diphosphate. Catalyzes the ATP- as well as the pyrophosphate-dependent phosphorylation of a specific serine residue in HPr, a phosphocarrier protein of the phosphoenolpyruvate-dependent sugar phosphotransferase system (PTS). HprK/P also catalyzes the pyrophosphate-producing, inorganic phosphate-dependent dephosphorylation (phosphorolysis) of seryl-phosphorylated HPr (P-Ser-HPr). The two antagonistic activities of HprK/P are regulated by several intracellular metabolites, which change their concentration in response to the absence or presence of rapidly metabolisable carbon sources (glucose, fructose, etc.) in the growth medium. Also phosphorylates/dephosphorylates the HPr-like catabolite repression protein crh on a specific serine residue. Therefore, by controlling the phosphorylation state of HPr and crh, HPrK/P is a sensor enzyme that plays a major role in the regulation of carbon metabolism and sugar transport: it mediates carbon catabolite repression (CCR), and regulates PTS-catalyzed carbohydrate uptake and inducer exclusion. The protein is Putative HPr kinase/phosphorylase 2 (hprK2) of Oceanobacillus iheyensis (strain DSM 14371 / CIP 107618 / JCM 11309 / KCTC 3954 / HTE831).